Here is a 407-residue protein sequence, read N- to C-terminus: TOM1-like protein 1 (407 aa).

Gly2 carries the N-acetylglycine modification. The region spanning 55 to 183 is the VHS domain; sequence ATTENLEEPD…SLKARGIRFP (129 aa). A GAT domain is found at 228–315; it reads FTAEQTKEAF…TLSKYEEMNK (88 aa). The segment at 315–407 is disordered; the sequence is KPSAPLTSHE…SSKNDDLIRF (93 aa). At Ser337 the chain carries Phosphoserine. Positions 337-347 are enriched in basic and acidic residues; the sequence is SPIHGREESLV. A compositionally biased stretch (gly residues) spans 353 to 364; that stretch reads VRGGFHGGGGSG. A compositionally biased stretch (basic and acidic residues) spans 388–407; it reads PDHDPKKEQSSSKNDDLIRF.

Belongs to the TOM1 family. As to expression, ubiquitously expressed.

The protein resides in the membrane. In terms of biological role, might contribute to the loading of the ESCRT machinery. In Arabidopsis thaliana (Mouse-ear cress), this protein is TOM1-like protein 1.